The chain runs to 244 residues: Small ribosomal subunit protein eS4 (244 aa).

The S4 RNA-binding domain occupies 43 to 106 (LPLLLVVRDV…DETYLVLFDE (64 aa)).

This sequence belongs to the eukaryotic ribosomal protein eS4 family.

The protein is Small ribosomal subunit protein eS4 of Methanococcus maripaludis (strain DSM 14266 / JCM 13030 / NBRC 101832 / S2 / LL).